Reading from the N-terminus, the 272-residue chain is Type III pantothenate kinase (272 aa).

Position 6 to 13 (6 to 13 (DVRNTHTV)) interacts with ATP. 109–112 (GADR) provides a ligand contact to substrate. Asp111 serves as the catalytic Proton acceptor. Asp131 contacts K(+). An ATP-binding site is contributed by Ser134. Thr186 contributes to the substrate binding site.

The protein belongs to the type III pantothenate kinase family. As to quaternary structure, homodimer. NH4(+) serves as cofactor. The cofactor is K(+).

The protein resides in the cytoplasm. The enzyme catalyses (R)-pantothenate + ATP = (R)-4'-phosphopantothenate + ADP + H(+). The protein operates within cofactor biosynthesis; coenzyme A biosynthesis; CoA from (R)-pantothenate: step 1/5. Its function is as follows. Catalyzes the phosphorylation of pantothenate (Pan), the first step in CoA biosynthesis. The chain is Type III pantothenate kinase from Mycobacterium bovis (strain BCG / Pasteur 1173P2).